Consider the following 179-residue polypeptide: Insulin-like growth factor 2 (179 aa).

A signal peptide spans 1–24 (MGITAGKSMLALLAFLAFASCCYA). The interval 25-52 (AYRPSETLCGGELVDTLQFVCGDRGFYF) is b. 3 disulfides stabilise this stretch: Cys-33-Cys-71, Cys-45-Cys-84, and Cys-70-Cys-75. Residues 53–64 (SRPSSRINRRSR) are c. Positions 65-85 (GIVEECCFRSCDLALLETYCA) are a. The tract at residues 86–91 (APAKSE) is d. Residues 92–179 (RDVSASTTVL…GGASSEASSD (88 aa)) constitute a propeptide, e peptide. Residue Thr-106 is glycosylated (O-linked (GalNAc...) threonine). O-linked (GalNAc...) serine glycosylation occurs at Ser-154. A disordered region spans residues 160–179 (ALPTQDPATHGGASSEASSD). Residue Thr-163 is glycosylated (O-linked (GalNAc...) threonine).

The protein belongs to the insulin family. As to quaternary structure, interacts with MYORG; this interaction is required for IGF2 secretion. Interacts with integrins ITGAV:ITGB3 and ITGA6:ITGB4; integrin-binding is required for IGF2 signaling. Interacts with IGFBP2. Post-translationally, proteolytically processed by PCSK4, proIGF2 is cleaved at Arg-128 and Arg-92 to generate big-IGF2 and mature IGF2.

The protein resides in the secreted. In terms of biological role, the insulin-like growth factors possess growth-promoting activity. Major fetal growth hormone in mammals. Plays a key role in regulating fetoplacental development. IGF2 is influenced by placental lactogen. Also involved in tissue differentiation. In adults, involved in glucose metabolism in adipose tissue, skeletal muscle and liver. Acts as a ligand for integrin which is required for IGF2 signaling. Positively regulates myogenic transcription factor MYOD1 function by facilitating the recruitment of transcriptional coactivators, thereby controlling muscle terminal differentiation. Inhibits myoblast differentiation and modulates metabolism via increasing the mitochondrial respiration rate. Functionally, preptin undergoes glucose-mediated co-secretion with insulin, and acts as a physiological amplifier of glucose-mediated insulin secretion. Exhibits osteogenic properties by increasing osteoblast mitogenic activity through phosphoactivation of MAPK1 and MAPK3. This chain is Insulin-like growth factor 2, found in Ovis aries (Sheep).